Reading from the N-terminus, the 64-residue chain is Small hydrophobic protein (64 aa).

Positions 6-15 (ITIEFSSKFW) are interaction with host BCAP31. The chain crosses the membrane as a helical span at residues 20-40 (LIHMITTIISLLIIISIMTAI). The tract at residues 38 to 43 (TAILNK) is interaction with small-molecule inhibitor. Residue N52 is glycosylated (N-linked (GlcNAc...) asparagine; by host).

This sequence belongs to the orthopneumovirus small hydrophobic protein family. In terms of assembly, homopentamer forming a funnel-like pore. Interacts with glycoprotein G; this interaction occurs on the surface of virion particles and infected cells. Interacts with host BCAP31 (via C-terminus); this interaction is direct. Post-translationally, four species of SH have been detected in infected cell cytoplasm: a 7.5 kDa non-glycosylated form (SH0), a 13-15 kDa form that contains one or two N-linked carbohydrate side chains of the high-mannose type (SHg), a 21-30 kDa polylactosaminoglycan-modified form of the protein (SHp), and the isoform generated by alternative translational initiation. Of these different forms, SH0 is by far the most abundant protein detected during virus infection. In terms of processing, tyrosine phosphorylated.

The protein localises to the virion membrane. The protein resides in the host cell membrane. It localises to the host Golgi apparatus membrane. It is found in the host endoplasmic reticulum membrane. Channel activity is inhibited by copper. Also inhibited by small-molecule pyronin B. Functionally, viroporin that forms a homopentameric ion channel displaying low ion selectivity. May play a role in virus morphogenesis and pathogenicity at various stages of the viral life cycle. Accumulates at the membrane of the Golgi apparatus in infected cells and may facilitate virus release by modifying the secretory pathway. May enhance host membrane permeability and disrupt cellular ion homeostasis, which can be sensed as damage-associated molecular patterns/danger signals, triggering NLRP3 inflammasome activation and inflammatory immune response. Also inhibits host TNFA-mediated signaling pathway and may delay apoptosis, allowing time for the virus to replicate. This is Small hydrophobic protein (SH) from Homo sapiens (Human).